Consider the following 424-residue polypeptide: Tyrosine--tRNA ligase (424 aa).

Residue Tyr-37 coordinates L-tyrosine. The short motif at 42–51 (PTADSLHLGH) is the 'HIGH' region element. Positions 175 and 179 each coordinate L-tyrosine. Positions 235-239 (KFGKT) match the 'KMSKS' region motif. Lys-238 serves as a coordination point for ATP. Positions 357 to 414 (ADLQQALVNAELVPSRGQARTMIGSNAVAINGEKQADPEYVFTDADRLFGRYTLLRRG) constitute an S4 RNA-binding domain.

Belongs to the class-I aminoacyl-tRNA synthetase family. TyrS type 1 subfamily. Homodimer.

The protein localises to the cytoplasm. It carries out the reaction tRNA(Tyr) + L-tyrosine + ATP = L-tyrosyl-tRNA(Tyr) + AMP + diphosphate + H(+). Functionally, catalyzes the attachment of tyrosine to tRNA(Tyr) in a two-step reaction: tyrosine is first activated by ATP to form Tyr-AMP and then transferred to the acceptor end of tRNA(Tyr). In Yersinia pestis bv. Antiqua (strain Antiqua), this protein is Tyrosine--tRNA ligase.